A 579-amino-acid chain; its full sequence is 2-succinyl-5-enolpyruvyl-6-hydroxy-3-cyclohexene-1-carboxylate synthase (579 aa).

Belongs to the TPP enzyme family. MenD subfamily. As to quaternary structure, homodimer. Mg(2+) serves as cofactor. Mn(2+) is required as a cofactor. Requires thiamine diphosphate as cofactor.

It carries out the reaction isochorismate + 2-oxoglutarate + H(+) = 5-enolpyruvoyl-6-hydroxy-2-succinyl-cyclohex-3-ene-1-carboxylate + CO2. It participates in quinol/quinone metabolism; 1,4-dihydroxy-2-naphthoate biosynthesis; 1,4-dihydroxy-2-naphthoate from chorismate: step 2/7. The protein operates within quinol/quinone metabolism; menaquinone biosynthesis. In terms of biological role, catalyzes the thiamine diphosphate-dependent decarboxylation of 2-oxoglutarate and the subsequent addition of the resulting succinic semialdehyde-thiamine pyrophosphate anion to isochorismate to yield 2-succinyl-5-enolpyruvyl-6-hydroxy-3-cyclohexene-1-carboxylate (SEPHCHC). The polypeptide is 2-succinyl-5-enolpyruvyl-6-hydroxy-3-cyclohexene-1-carboxylate synthase (Shewanella frigidimarina (strain NCIMB 400)).